Here is an 856-residue protein sequence, read N- to C-terminus: Phosphoenolpyruvate synthase (856 aa).

The active-site Tele-phosphohistidine intermediate is the His-433. The substrate site is built by Arg-523, Arg-636, Glu-738, Gly-759, Ser-760, Asn-761, and Asp-762. Glu-738 is a binding site for Mg(2+). Asp-762 contacts Mg(2+). The Proton donor role is filled by Cys-809.

Belongs to the PEP-utilizing enzyme family. Requires Mg(2+) as cofactor.

It catalyses the reaction pyruvate + ATP + H2O = phosphoenolpyruvate + AMP + phosphate + 2 H(+). The protein operates within carbohydrate biosynthesis; gluconeogenesis. Catalyzes the phosphorylation of pyruvate to phosphoenolpyruvate. This chain is Phosphoenolpyruvate synthase (ppsA), found in Aquifex aeolicus (strain VF5).